The sequence spans 427 residues: Glutamate-1-semialdehyde 2,1-aminomutase (427 aa).

Lysine 267 is subject to N6-(pyridoxal phosphate)lysine.

This sequence belongs to the class-III pyridoxal-phosphate-dependent aminotransferase family. HemL subfamily. As to quaternary structure, homodimer. Pyridoxal 5'-phosphate is required as a cofactor.

The protein resides in the cytoplasm. It carries out the reaction (S)-4-amino-5-oxopentanoate = 5-aminolevulinate. The protein operates within porphyrin-containing compound metabolism; protoporphyrin-IX biosynthesis; 5-aminolevulinate from L-glutamyl-tRNA(Glu): step 2/2. This is Glutamate-1-semialdehyde 2,1-aminomutase from Acetivibrio thermocellus (strain ATCC 27405 / DSM 1237 / JCM 9322 / NBRC 103400 / NCIMB 10682 / NRRL B-4536 / VPI 7372) (Clostridium thermocellum).